Consider the following 313-residue polypeptide: D-alanine--D-alanine ligase (313 aa).

One can recognise an ATP-grasp domain in the interval 108 to 308; that stretch reads KLVWQQTGVP…YSELVVKVLS (201 aa). Residue 138–193 participates in ATP binding; it reads VAKLGLPLFVKPASEGSSVAVLKVKTADALPAALEEAATHDKIVIVEKSIEGGGEY. Aspartate 262, glutamate 275, and asparagine 277 together coordinate Mg(2+).

Belongs to the D-alanine--D-alanine ligase family. Mg(2+) serves as cofactor. Requires Mn(2+) as cofactor.

It is found in the cytoplasm. It catalyses the reaction 2 D-alanine + ATP = D-alanyl-D-alanine + ADP + phosphate + H(+). It participates in cell wall biogenesis; peptidoglycan biosynthesis. Its function is as follows. Cell wall formation. In Burkholderia cenocepacia (strain ATCC BAA-245 / DSM 16553 / LMG 16656 / NCTC 13227 / J2315 / CF5610) (Burkholderia cepacia (strain J2315)), this protein is D-alanine--D-alanine ligase.